We begin with the raw amino-acid sequence, 326 residues long: Pyruvate dehydrogenase E1 component subunit alpha (326 aa).

As to quaternary structure, heterodimer of an alpha and a beta chain. Requires thiamine diphosphate as cofactor.

It carries out the reaction N(6)-[(R)-lipoyl]-L-lysyl-[protein] + pyruvate + H(+) = N(6)-[(R)-S(8)-acetyldihydrolipoyl]-L-lysyl-[protein] + CO2. In terms of biological role, the pyruvate dehydrogenase complex catalyzes the overall conversion of pyruvate to acetyl-CoA and CO(2). It contains multiple copies of three enzymatic components: pyruvate dehydrogenase (E1), dihydrolipoamide acetyltransferase (E2) and lipoamide dehydrogenase (E3). The protein is Pyruvate dehydrogenase E1 component subunit alpha (pdhA) of Rickettsia conorii (strain ATCC VR-613 / Malish 7).